A 258-amino-acid polypeptide reads, in one-letter code: 5'-nucleotidase SurE (258 aa).

D9, D10, S42, and N96 together coordinate a divalent metal cation.

It belongs to the SurE nucleotidase family. A divalent metal cation is required as a cofactor.

It localises to the cytoplasm. The enzyme catalyses a ribonucleoside 5'-phosphate + H2O = a ribonucleoside + phosphate. Its function is as follows. Nucleotidase that shows phosphatase activity on nucleoside 5'-monophosphates. The protein is 5'-nucleotidase SurE of Campylobacter jejuni subsp. jejuni serotype O:2 (strain ATCC 700819 / NCTC 11168).